A 595-amino-acid polypeptide reads, in one-letter code: DNA polymerase (595 aa).

The 3'-5' exonuclease domain occupies 1–212; it reads MIELRHEVQG…CKSLTPLVPD (212 aa). Residues 213-595 form a polymerase region; sequence VSRSLVPYEH…SWGSLYGADY (383 aa).

It belongs to the DNA polymerase type-A family.

It carries out the reaction DNA(n) + a 2'-deoxyribonucleoside 5'-triphosphate = DNA(n+1) + diphosphate. Replicates viral genomic DNA. This polymerase possesses two enzymatic activities: DNA synthesis (polymerase) and an exonucleolytic activity that degrades single-stranded DNA in the 3'-5' direction. This is DNA polymerase (44) from Mycobacterium phage L5 (Mycobacteriophage L5).